We begin with the raw amino-acid sequence, 521 residues long: Ankyrin repeat and death domain-containing protein 1B (521 aa).

ANK repeat units lie at residues 60 to 89 (AIERSFQNAAKSSNLDLMEKLFEKKVNINA), 93 to 122 (MNRTALHFAVGRNSLSAVDFLLSHKARVDV), 126 to 155 (HGLTVIHLAAWSGSFEIMLMLVKAGADQRA), 159 to 190 (EGMNALHLAAQNNNLHIVDYLIHDLHLHDLNQ), 194 to 223 (RGRKPFHLAAERGHVEMIEKLIFLNLHTSE), 227 to 256 (DGNTALHLAAMHGHSPAVQVLLTQWSEVNE), 260 to 289 (LNVSALQTATRNGHTALVNFLLGENADLQQ), 293 to 322 (SKEPPLHLAVINNRPAVVNSLLSARHDVDV), 326 to 355 (RRQTPLHVAADLGNVELVETLLKAGCNLKI), and 359 to 388 (QGKTALAVAARSQHSLVVDMLIKAERYYAW). A Death domain is found at 420 to 508 (TLLWNLAYRQ…ELAEKIRQFK (89 aa)).

The polypeptide is Ankyrin repeat and death domain-containing protein 1B (Ankdd1b) (Mus musculus (Mouse)).